Consider the following 56-residue polypeptide: Bowman-Birk type proteinase inhibitor I-2B (56 aa).

4 disulfides stabilise this stretch: C10/C25, C15/C23, C32/C39, and C36/C51.

This sequence belongs to the Bowman-Birk serine protease inhibitor family.

This is Bowman-Birk type proteinase inhibitor I-2B from Triticum aestivum (Wheat).